Here is a 91-residue protein sequence, read N- to C-terminus: Sec-independent protein translocase protein TatA (91 aa).

The helical transmembrane segment at 3-23 (FFGIGLPEMLVILAIALLVFG) threads the bilayer. The disordered stretch occupies residues 57 to 91 (DRTPATPAEATVEPPVLDSAPTEAVTVEKQTETQV). A compositionally biased stretch (low complexity) spans 59-72 (TPATPAEATVEPPV).

Belongs to the TatA/E family. Forms a complex with TatC.

Its subcellular location is the cell inner membrane. Functionally, part of the twin-arginine translocation (Tat) system that transports large folded proteins containing a characteristic twin-arginine motif in their signal peptide across membranes. TatA could form the protein-conducting channel of the Tat system. The chain is Sec-independent protein translocase protein TatA from Synechococcus elongatus (strain ATCC 33912 / PCC 7942 / FACHB-805) (Anacystis nidulans R2).